A 138-amino-acid polypeptide reads, in one-letter code: Large ribosomal subunit protein uL14 (138 aa).

It belongs to the universal ribosomal protein uL14 family. Part of the 50S ribosomal subunit. Forms a cluster with proteins L3 and L24e, part of which may contact the 16S rRNA in 2 intersubunit bridges.

Functionally, binds to 23S rRNA. Forms part of two intersubunit bridges in the 70S ribosome. The chain is Large ribosomal subunit protein uL14 from Hyperthermus butylicus (strain DSM 5456 / JCM 9403 / PLM1-5).